A 336-amino-acid polypeptide reads, in one-letter code: Glycerol-3-phosphate dehydrogenase [NAD(P)+] (336 aa).

Residues serine 16, tyrosine 17, histidine 37, and lysine 111 each coordinate NADPH. Residues lysine 111, glycine 140, and threonine 142 each coordinate sn-glycerol 3-phosphate. Alanine 144 lines the NADPH pocket. Lysine 196, aspartate 249, serine 259, arginine 260, and asparagine 261 together coordinate sn-glycerol 3-phosphate. The active-site Proton acceptor is lysine 196. Arginine 260 is a binding site for NADPH. Residues valine 284 and glutamate 286 each contribute to the NADPH site.

It belongs to the NAD-dependent glycerol-3-phosphate dehydrogenase family.

It is found in the cytoplasm. The enzyme catalyses sn-glycerol 3-phosphate + NAD(+) = dihydroxyacetone phosphate + NADH + H(+). The catalysed reaction is sn-glycerol 3-phosphate + NADP(+) = dihydroxyacetone phosphate + NADPH + H(+). Its pathway is membrane lipid metabolism; glycerophospholipid metabolism. Catalyzes the reduction of the glycolytic intermediate dihydroxyacetone phosphate (DHAP) to sn-glycerol 3-phosphate (G3P), the key precursor for phospholipid synthesis. This is Glycerol-3-phosphate dehydrogenase [NAD(P)+] from Actinobacillus pleuropneumoniae serotype 3 (strain JL03).